A 142-amino-acid polypeptide reads, in one-letter code: Large ribosomal subunit protein uL13 (142 aa).

The protein belongs to the universal ribosomal protein uL13 family. In terms of assembly, part of the 50S ribosomal subunit.

This protein is one of the early assembly proteins of the 50S ribosomal subunit, although it is not seen to bind rRNA by itself. It is important during the early stages of 50S assembly. In Polaromonas sp. (strain JS666 / ATCC BAA-500), this protein is Large ribosomal subunit protein uL13.